The primary structure comprises 333 residues: Glyceraldehyde-3-phosphate dehydrogenase (333 aa).

NAD(+) is bound by residues 12-13 (RI), aspartate 36, arginine 80, and serine 120. D-glyceraldehyde 3-phosphate-binding positions include 150–152 (SCT), threonine 181, arginine 196, 209–210 (TG), and arginine 232. Cysteine 151 (nucleophile) is an active-site residue. Position 314 (asparagine 314) interacts with NAD(+).

This sequence belongs to the glyceraldehyde-3-phosphate dehydrogenase family. In terms of assembly, homotetramer.

It is found in the cytoplasm. The enzyme catalyses D-glyceraldehyde 3-phosphate + phosphate + NAD(+) = (2R)-3-phospho-glyceroyl phosphate + NADH + H(+). It functions in the pathway carbohydrate degradation; glycolysis; pyruvate from D-glyceraldehyde 3-phosphate: step 1/5. Its function is as follows. Catalyzes the oxidative phosphorylation of glyceraldehyde 3-phosphate (G3P) to 1,3-bisphosphoglycerate (BPG) using the cofactor NAD. The first reaction step involves the formation of a hemiacetal intermediate between G3P and a cysteine residue, and this hemiacetal intermediate is then oxidized to a thioester, with concomitant reduction of NAD to NADH. The reduced NADH is then exchanged with the second NAD, and the thioester is attacked by a nucleophilic inorganic phosphate to produce BPG. This is Glyceraldehyde-3-phosphate dehydrogenase (gapB) from Cereibacter sphaeroides (Rhodobacter sphaeroides).